Reading from the N-terminus, the 380-residue chain is Cytochrome b (380 aa).

A run of 4 helical transmembrane segments spans residues 34–54, 78–99, 114–134, and 179–199; these read FGSLLGVCLLTQILTGLLLAM, WLIRNLHANGASFFFICIYLHI, WNTGVILLLTLMATAFVGYVL, and FFALHFLLPFMIAGLTLIHLT. Heme b contacts are provided by H84 and H98. H183 and H197 together coordinate heme b. Residue H202 participates in a ubiquinone binding. 4 helical membrane-spanning segments follow: residues 227–247, 289–309, 321–341, and 348–368; these read LKDILGFMLMFLPLTTLALFS, LGGVLALAASVLVLFLAPFLH, LSQLLFWILVANLFILTWVGS, and FIIIGQLASLTYFTILLILFP.

This sequence belongs to the cytochrome b family. In terms of assembly, the cytochrome bc1 complex contains 11 subunits: 3 respiratory subunits (MT-CYB, CYC1 and UQCRFS1), 2 core proteins (UQCRC1 and UQCRC2) and 6 low-molecular weight proteins (UQCRH/QCR6, UQCRB/QCR7, UQCRQ/QCR8, UQCR10/QCR9, UQCR11/QCR10 and a cleavage product of UQCRFS1). This cytochrome bc1 complex then forms a dimer. Heme b is required as a cofactor.

It is found in the mitochondrion inner membrane. In terms of biological role, component of the ubiquinol-cytochrome c reductase complex (complex III or cytochrome b-c1 complex) that is part of the mitochondrial respiratory chain. The b-c1 complex mediates electron transfer from ubiquinol to cytochrome c. Contributes to the generation of a proton gradient across the mitochondrial membrane that is then used for ATP synthesis. This is Cytochrome b (MT-CYB) from Calonectris leucomelas (Streaked shearwater).